Reading from the N-terminus, the 474-residue chain is Ribulose bisphosphate carboxylase large chain (474 aa).

The substrate site is built by Asn-117 and Thr-167. Lys-169 serves as the catalytic Proton acceptor. Lys-171 is a substrate binding site. Lys-195, Asp-197, and Glu-198 together coordinate Mg(2+). An N6-carboxylysine modification is found at Lys-195. Catalysis depends on His-288, which acts as the Proton acceptor. Substrate contacts are provided by Arg-289, His-321, and Ser-373.

It belongs to the RuBisCO large chain family. Type I subfamily. As to quaternary structure, heterohexadecamer of 8 large chains and 8 small chains. Mg(2+) is required as a cofactor.

The enzyme catalyses 2 (2R)-3-phosphoglycerate + 2 H(+) = D-ribulose 1,5-bisphosphate + CO2 + H2O. The catalysed reaction is D-ribulose 1,5-bisphosphate + O2 = 2-phosphoglycolate + (2R)-3-phosphoglycerate + 2 H(+). In terms of biological role, ruBisCO catalyzes two reactions: the carboxylation of D-ribulose 1,5-bisphosphate, the primary event in carbon dioxide fixation, as well as the oxidative fragmentation of the pentose substrate. Both reactions occur simultaneously and in competition at the same active site. The chain is Ribulose bisphosphate carboxylase large chain from Hydrogenophilus thermoluteolus (Pseudomonas hydrogenothermophila).